The following is a 451-amino-acid chain: AAA-ATPase At3g28570, mitochondrial (451 aa).

The N-terminal 48 residues, 1-48 (MFAENLTRIGSNVAGLFFVWSTLKRYFPRQIQQLLFNAIQRIPIFKRL), are a transit peptide targeting the mitochondrion. 243-250 (GPPGTGKS) contributes to the ATP binding site.

This sequence belongs to the AAA ATPase family. BCS1 subfamily. Mg(2+) serves as cofactor.

It localises to the mitochondrion. The catalysed reaction is ATP + H2O = ADP + phosphate + H(+). In Arabidopsis thaliana (Mouse-ear cress), this protein is AAA-ATPase At3g28570, mitochondrial.